Consider the following 159-residue polypeptide: Eukaryotic translation initiation factor 5A-1 (159 aa).

Over residues 1–12 (MSDEEHHFESKA) the composition is skewed to basic and acidic residues. Positions 1-23 (MSDEEHHFESKADAGASKTYPQQ) are disordered. K52 is subject to Hypusine.

Belongs to the eIF-5A family. Lys-52 undergoes hypusination, a unique post-translational modification that consists in the addition of a butylamino group from spermidine to lysine side chain, leading to the formation of the unusual amino acid hypusine. eIF-5As are the only known proteins to undergo this modification, which is essential for their function.

Its function is as follows. Translation factor that promotes translation elongation and termination, particularly upon ribosome stalling at specific amino acid sequence contexts. Binds between the exit (E) and peptidyl (P) site of the ribosome and promotes rescue of stalled ribosome: specifically required for efficient translation of polyproline-containing peptides as well as other motifs that stall the ribosome. Acts as a ribosome quality control (RQC) cofactor by joining the RQC complex to facilitate peptidyl transfer during CAT tailing step. This Nicotiana plumbaginifolia (Leadwort-leaved tobacco) protein is Eukaryotic translation initiation factor 5A-1 (EIF-5A1).